A 539-amino-acid polypeptide reads, in one-letter code: Glucans biosynthesis protein D (539 aa).

The tat-type signal signal peptide spans Met-1–Ala-29.

Belongs to the OpgD/OpgG family. Predicted to be exported by the Tat system. The position of the signal peptide cleavage has not been experimentally proven.

It localises to the periplasm. It participates in glycan metabolism; osmoregulated periplasmic glucan (OPG) biosynthesis. Its function is as follows. Probably involved in the control of the structural glucose backbone of osmoregulated periplasmic glucans (OPGs). This chain is Glucans biosynthesis protein D, found in Pseudomonas savastanoi pv. phaseolicola (strain 1448A / Race 6) (Pseudomonas syringae pv. phaseolicola (strain 1448A / Race 6)).